Consider the following 330-residue polypeptide: MWATKSRRCAVHTSSMASGDVLPRFFTVFLSHCSSESMVIPRSYYNLLPRPLPKTAILIGTGGRFWKVAMTSKQEQVYFEQGWGNFVADNQLKEGEFLTFVFDGHKSYEVSIYGRGDCKETRAVIQVEEISDDTEDDNVSLHSPSNVSLDSLSNDSHHSTSNVSLRSLSNDSLHGDAEIESDSEYSPENLPSASISVESVEVVNPTTSRQRSYKRKTIENPHLYLDDPNNVCFETCLKLRKFELLVHAQLVKDYGLIFSDNVDYIDGYGKLTAKTTKWADQRVCINKWQKICERNQFTENDSILCEILRNEDKVVYAIKIHIFRDAAAST.

Residues 23-116 constitute a DNA-binding region (TF-B3); the sequence is PRFFTVFLSH…SYEVSIYGRG (94 aa). The segment covering 129–138 has biased composition (acidic residues); the sequence is EISDDTEDDN. The interval 129–169 is disordered; it reads EISDDTEDDNVSLHSPSNVSLDSLSNDSHHSTSNVSLRSLS. Low complexity predominate over residues 142–162; the sequence is HSPSNVSLDSLSNDSHHSTSN.

The protein resides in the nucleus. This Arabidopsis thaliana (Mouse-ear cress) protein is B3 domain-containing protein REM21 (REM21).